A 253-amino-acid polypeptide reads, in one-letter code: Hydroxypyruvate/pyruvate aldolase (253 aa).

Catalysis depends on His-48, which acts as the Proton acceptor. Residues Glu-151 and Asp-177 each coordinate a divalent metal cation.

Belongs to the HpcH/HpaI aldolase family. It depends on a divalent metal cation as a cofactor.

The catalysed reaction is D-glyceraldehyde + pyruvate = 2-dehydro-3-deoxy-L-galactonate. Its function is as follows. Aldolase which can catalyze in vitro the aldolisation reaction between hydroxypyruvate (HPA) or pyruvate (PA) and D-glyceraldehyde (D-GA). The condensation of pyruvate and D-glyceraldehyde produces 2-dehydro-3-deoxy-L-galactonate. Has weak activity with hydroxypyruvate and D-glyceraldehyde. The protein is Hydroxypyruvate/pyruvate aldolase of Sagittula stellata (strain ATCC 700073 / DSM 11524 / E-37).